Consider the following 709-residue polypeptide: Putative extracellular sulfatase Sulf-1 homolog (709 aa).

The signal sequence occupies residues 1–27 (MISNLRISNYFIIFYVLFLIIPIKVTS). Ca(2+) contacts are provided by D43, D44, and C79. Catalysis depends on C79, which acts as the Nucleophile. At C79 the chain carries 3-oxoalanine (Cys). N-linked (GlcNAc...) asparagine glycans are attached at residues N103, N162, and N189. The Ca(2+) site is built by D308 and H309. N-linked (GlcNAc...) asparagine glycosylation is found at N344, N468, N500, N540, N566, N610, and N620.

Belongs to the sulfatase family. It depends on Ca(2+) as a cofactor. Post-translationally, the conversion to 3-oxoalanine (also known as C-formylglycine, FGly), of a serine or cysteine residue in prokaryotes and of a cysteine residue in eukaryotes, is critical for catalytic activity.

Its subcellular location is the endoplasmic reticulum. It is found in the golgi apparatus. The protein resides in the golgi stack. The protein localises to the cell surface. The polypeptide is Putative extracellular sulfatase Sulf-1 homolog (sul-1) (Caenorhabditis elegans).